A 242-amino-acid chain; its full sequence is 1-(5-phosphoribosyl)-5-[(5-phosphoribosylamino)methylideneamino] imidazole-4-carboxamide isomerase (242 aa).

Aspartate 8 (proton acceptor) is an active-site residue. Aspartate 129 (proton donor) is an active-site residue.

Belongs to the HisA/HisF family.

Its subcellular location is the cytoplasm. It catalyses the reaction 1-(5-phospho-beta-D-ribosyl)-5-[(5-phospho-beta-D-ribosylamino)methylideneamino]imidazole-4-carboxamide = 5-[(5-phospho-1-deoxy-D-ribulos-1-ylimino)methylamino]-1-(5-phospho-beta-D-ribosyl)imidazole-4-carboxamide. The protein operates within amino-acid biosynthesis; L-histidine biosynthesis; L-histidine from 5-phospho-alpha-D-ribose 1-diphosphate: step 4/9. This Dictyoglomus thermophilum (strain ATCC 35947 / DSM 3960 / H-6-12) protein is 1-(5-phosphoribosyl)-5-[(5-phosphoribosylamino)methylideneamino] imidazole-4-carboxamide isomerase.